We begin with the raw amino-acid sequence, 295 residues long: UDP-N-acetylenolpyruvoylglucosamine reductase (295 aa).

The FAD-binding PCMH-type domain maps to Lys-24 to Gly-188. Residue Arg-168 is part of the active site. Residue Ser-217 is the Proton donor of the active site. Residue Glu-287 is part of the active site.

This sequence belongs to the MurB family. FAD is required as a cofactor.

Its subcellular location is the cytoplasm. The enzyme catalyses UDP-N-acetyl-alpha-D-muramate + NADP(+) = UDP-N-acetyl-3-O-(1-carboxyvinyl)-alpha-D-glucosamine + NADPH + H(+). Its pathway is cell wall biogenesis; peptidoglycan biosynthesis. Its function is as follows. Cell wall formation. This Rickettsia rickettsii (strain Iowa) protein is UDP-N-acetylenolpyruvoylglucosamine reductase.